The sequence spans 458 residues: Type III intermediate filament (458 aa).

The segment at 1–100 is head; the sequence is MEKGYKMNRS…KVNRTNEKAE (100 aa). In terms of domain architecture, IF rod spans 97–405; it reads EKAEMIELND…KLLEGEENRI (309 aa). A tail region spans residues 406-458; that stretch reads SMPLPSFGSMSLSDAMFEQQPFENRTSKKKIVIKTVETSGGDVISETTQKIED.

It belongs to the intermediate filament family.

The polypeptide is Type III intermediate filament (Tetronarce californica (Pacific electric ray)).